The following is a 298-amino-acid chain: MATLKEVQLKIGSVKKTRQITSAMKMVATSRLRGSQEKMDRFKPYASKFSEVLGSIAGKAGEEASPLLVPREEPKKVNVILCTSDRGLCGGFNVNLIDKADKFIKSKLQDKEVTFTCFGKKGRDWAKKMSMTIDDQYLGVVGGKFDFSVASTSGQKLINRFLEADVDEVYLVYSEFKNLARQEPVVKQLLPIPSLEAMEKPDEAGAKEETAYLAEHICEPSSDALLGEMLPKNIFIQIYDALLQTSTSENAQRMKAMENATKACKDMIDELQTIFNKTRQAGITADLMDIVGGAEALN.

This sequence belongs to the ATPase gamma chain family. F-type ATPases have 2 components, CF(1) - the catalytic core - and CF(0) - the membrane proton channel. CF(1) has five subunits: alpha(3), beta(3), gamma(1), delta(1), epsilon(1). CF(0) has three main subunits: a, b and c.

It is found in the cell inner membrane. Produces ATP from ADP in the presence of a proton gradient across the membrane. The gamma chain is believed to be important in regulating ATPase activity and the flow of protons through the CF(0) complex. The protein is ATP synthase gamma chain of Desulforapulum autotrophicum (strain ATCC 43914 / DSM 3382 / VKM B-1955 / HRM2) (Desulfobacterium autotrophicum).